The sequence spans 334 residues: Formamidase (334 aa).

The 247-residue stretch at 14–260 (FLVAAIQFPV…WEIVTGEIYP (247 aa)) folds into the CN hydrolase domain. E60 (proton acceptor) is an active-site residue. The active-site Proton donor is the K133. C166 functions as the Nucleophile in the catalytic mechanism.

Belongs to the carbon-nitrogen hydrolase superfamily. Aliphatic amidase family.

It catalyses the reaction formamide + H2O = formate + NH4(+). In terms of biological role, is an aliphatic amidase with a restricted substrate specificity, as it only hydrolyzes formamide. The polypeptide is Formamidase (Helicobacter pylori (strain Shi470)).